The following is a 151-amino-acid chain: tRNA-specific adenosine deaminase (151 aa).

The CMP/dCMP-type deaminase domain maps to 1 to 111; the sequence is MGKEYFLKVA…LDKKHGGVVS (111 aa). Histidine 52 serves as a coordination point for Zn(2+). Glutamate 54 (proton donor) is an active-site residue. The Zn(2+) site is built by cysteine 82 and cysteine 85.

The protein belongs to the cytidine and deoxycytidylate deaminase family. As to quaternary structure, homodimer. It depends on Zn(2+) as a cofactor.

It catalyses the reaction adenosine(34) in tRNA + H2O + H(+) = inosine(34) in tRNA + NH4(+). Functionally, catalyzes the deamination of adenosine to inosine at the wobble position 34 of tRNA(Arg2). This chain is tRNA-specific adenosine deaminase, found in Aquifex aeolicus (strain VF5).